We begin with the raw amino-acid sequence, 93 residues long: uncharacterized protein (93 aa).

The TRAM domain maps to 24–85; it reads QLQVGDTLKL…IQTQVGRLFF (62 aa).

This sequence belongs to the ycf81 family.

This is an uncharacterized protein from Thermus thermophilus.